We begin with the raw amino-acid sequence, 420 residues long: Napsin-A (420 aa).

The signal sequence occupies residues methionine 1–threonine 25. Residues leucine 26–aspartate 63 constitute a propeptide, activation peptide. The region spanning tyrosine 78–alanine 399 is the Peptidase A1 domain. Asparagine 90 is a glycosylation site (N-linked (GlcNAc...) asparagine). Residue aspartate 96 is part of the active site. A disulfide bond links cysteine 109 and cysteine 116. Asparagine 133 carries an N-linked (GlcNAc...) asparagine glycan. Cysteine 274 and cysteine 278 are joined by a disulfide. Aspartate 283 is a catalytic residue. A disulfide bridge connects residues cysteine 317 and cysteine 354. The N-linked (GlcNAc...) asparagine glycan is linked to asparagine 336.

This sequence belongs to the peptidase A1 family. In terms of tissue distribution, expressed predominantly in adult lung (type II pneumocytes) and kidney and in fetal lung. Low levels in adult spleen and very low levels in peripheral blood leukocytes.

The protein resides in the secreted. May be involved in processing of pneumocyte surfactant precursors. The polypeptide is Napsin-A (NAPSA) (Homo sapiens (Human)).